The following is a 266-amino-acid chain: Translation initiation factor 2 subunit alpha (266 aa).

The S1 motif domain maps to 12 to 83; the sequence is GEILIATVKQ…RKGTVDVSLK (72 aa).

This sequence belongs to the eIF-2-alpha family. Heterotrimer composed of an alpha, a beta and a gamma chain.

Functionally, eIF-2 functions in the early steps of protein synthesis by forming a ternary complex with GTP and initiator tRNA. In Saccharolobus solfataricus (strain ATCC 35092 / DSM 1617 / JCM 11322 / P2) (Sulfolobus solfataricus), this protein is Translation initiation factor 2 subunit alpha.